Reading from the N-terminus, the 1489-residue chain is MDVNWMDDDEDLVAALAMHEEQKSEDADGTRWEHCDEACDGFDMATGHNWIYPNNLPLRSYQQTIVQSALFKNTLVVLPTGLGKTFIAAVVMYNFYRWYPKGKIVFMAPTRPLVSQQIHASQKIMPFPSEDTVQLTGQLPRPKRAELWASKRVFFATPQVVHSDMLEADGECSFPFGSIKLIVVDEAHRAKGRYAYTQVADCLMARNRYFRMLALSATPGRTMEDVAAVCRNLYISNLQVRWDTSIDVQPYIHRRTIRTIVVSLKERIKEPRERLLQIIEPYLRQLMEAEIFKGNKGTVSRNSLLFEQKSFVERSAQGQRHPDHNIIMGNFAMCISMYHSLDLMERHGLRVFVNNFDADDDGREKFVLARDGNLRNLVEQVRQELGANPLDYTTHAMTNGEVPPLPSDLDFGHAKYEKLRQVLVQHFQANPDSRAIVFCEYRESVMLIHRLLLQHRPVLRPRCFVGQGSTVGASYALTQKQQLQIMTDFRSGTSNVLVATSIGEEGLDVGEVEMIVCFDICSTNPTRFIQRIGRTGRKKNGEVVMLVTEGREQQVLKDVLANKDQINKKLLNSSVVKLSLYEQNPRMVPSKFQPKCEEKHMEPVAEEKPKPKSAAKTKESRKRKQPVAQTGSLRKYFKESPPTESQQGILQGIKPYQMSEASQQLVKQQVLRRSVTLKNFFGESQASSTLTSSQEDVQRLRKLTRLLQSSKPFVSDSKDLMSHLQDDHLPRQIKLYLLKSNPEFLRETHLKMQVQSELNIADDRLNSRQRRTKNNYQLLLDICDGMDQMNELLQGDNSGAEISFRDELNPIYNQSPKKFDTICEQIFDGLNEHGLNSNNFELKQDLLEKLELRNLETTVNEQLGGIEASWSEEEWDQQEEDVKFESMYLSQQLNLPDANVVPHSSTPLRVKPLSKLMFKTLQGDIEEEYHSGMEASELGDNLGRLNSLMNASESKIKATERIAPIPVVDSTIETNHFPAVEESQRSTPISIADSSGESNHCAVNKNSEIYPMSIDETKVEVKSSLNLKMHAESIVEDLDIDLDDFLEPMDKELELASQTKGKSQENIVDHQMEKLEKNCEQKETAHNNDLDLTDEDLKEFLEPMVEEVELMSQKKANDFKDFLEPMPEELELMSQQKKNILLPSTETIKNSENKNSHEDGSRTVSPDIFGSDSMSPLKPQGKSLAAKLAAKAAAKVLPCPPPNSVGLNSPENRKRTNPSIQEKSPSIFDLYLNRMRGRGRLAKAAENLHRITSTNPTISVPKDEEDSPIARRPSKRKIVISSDEEEEQKPQIAETQVDCESDDYERILDTQMPDPRKTPTRPRHKRSKFNSFILDEAEKSGSDHEEEGETTIGTYLKDSMIVSSDDEDHNDTNTHAIYLRALKSPIQRPGAFKMPPPRVFRDESHIFSQPVEDDSSQYMQCSFIVDDESSTIERGHDVSECPLEKAERILKERRKQRRLGKVPSAPVNKRRRLQTISTSSDEDDVVLID.

Positions 65–237 (IVQSALFKNT…AVCRNLYISN (173 aa)) constitute a Helicase ATP-binding domain. 78–85 (LPTGLGKT) is a binding site for ATP. The DEAH box motif lies at 185-188 (DEAH). A Helicase C-terminal domain is found at 418–584 (KLRQVLVQHF…VVKLSLYEQN (167 aa)). Disordered regions lie at residues 591–647 (KFQP…ESQQ), 980–1000 (VEES…ESNH), 1145–1182 (TETI…PQGK), 1196–1222 (VLPC…SIQE), 1255–1293 (NPTI…PQIA), and 1452–1489 (ERRK…VLID). Basic and acidic residues predominate over residues 594-610 (PKCEEKHMEPVAEEKPK). Positions 611–625 (PKSAAKTKESRKRKQ) are enriched in basic residues. Residues 985–998 (RSTPISIADSSGES) are compositionally biased toward polar residues. Residues 1149–1161 (KNSENKNSHEDGS) show a composition bias toward basic and acidic residues. The segment covering 1480–1489 (SDEDDVVLID) has biased composition (acidic residues).

It belongs to the DEAD box helicase family. DEAH subfamily. FANCM sub-subfamily.

It is found in the nucleus. The enzyme catalyses ATP + H2O = ADP + phosphate + H(+). The catalysed reaction is Couples ATP hydrolysis with the unwinding of duplex DNA by translocating in the 3'-5' direction.. Its function is as follows. A ssDNA-dependent ATPase with 3' to 5' helicase activity. Involved in multiple DNA-damage responses, some that require ATPase and helicase activity and some that are independent of these. Involved in DNA interstrand cross-link repair, probably together with Fancl and other Fanconi anemia pathway homologs. Independent of Fancl involved in DNA double strand break repair, including contributing to the synthesis-dependent strand annealing (SDSA) pathway. Probably contributes to SDSA by unwinding short duplex regions in complex D-loop-like DNA structures. The protein is DEAD-box ATP-dependent DNA helicase Fancm of Drosophila melanogaster (Fruit fly).